The chain runs to 240 residues: Protein GUCD1 (240 aa).

This is Protein GUCD1 (GUCD1) from Homo sapiens (Human).